A 156-amino-acid chain; its full sequence is Perlucin-like protein (156 aa).

A signal peptide spans 1–22 (MGKLTVVGILTLFIFYIVAASG). 3 disulfides stabilise this stretch: C30/C41, C58/C156, and C131/C147. One can recognise a C-type lectin domain in the interval 37 to 156 (YKTNCYFFSP…CNTDQMGYIC (120 aa)).

As to expression, component of the organic matrix of calcified shell layers like nacre and prisms.

It localises to the secreted. The protein is Perlucin-like protein of Mytilus galloprovincialis (Mediterranean mussel).